Reading from the N-terminus, the 839-residue chain is Transcription regulator protein BACH2 (839 aa).

The BTB domain occupies C37–R103. Disordered regions lie at residues Q150–M170 and H247–S331. Acidic residues predominate over residues G161–M170. Over residues H247–N263 the composition is skewed to polar residues. Over residues T297–Q312 the composition is skewed to basic and acidic residues. A Phosphoserine modification is found at S314. Residues T321 to S331 are compositionally biased toward low complexity. Residues K381 and K420 each participate in a glycyl lysine isopeptide (Lys-Gly) (interchain with G-Cter in SUMO2) cross-link. S520 is modified (phosphoserine). The segment at Q582–G609 is disordered. The segment covering S583–E597 has biased composition (polar residues). The region spanning F645 to L708 is the bZIP domain. A basic motif region spans residues R650 to K666. Residues I670–I677 are leucine-zipper. Residues P778 to S813 are disordered. Over residues P781–S790 the composition is skewed to polar residues. The Nuclear export signal motif lies at D819–A839.

It belongs to the bZIP family. CNC subfamily. In terms of assembly, homodimer; disulfide-linked. Heterodimer of BACH2 and Maf-related transcription factors. Post-translationally, the reversible disulfide bond may provide a mechanism to regulate the activity in oxidative stress responses. In terms of processing, phosphorylation at Ser-520 downstream of the PI-3K pathway promotes nuclear export. Detected in brain and spleen.

The protein resides in the cytoplasm. It is found in the nucleus. Transcriptional regulator that acts as a repressor or activator. Binds to Maf recognition elements (MARE). Plays an important role in coordinating transcription activation and repression by MAFK. Induces apoptosis in response to oxidative stress through repression of the antiapoptotic factor HMOX1. Positively regulates the nuclear import of actin. Is a key regulator of adaptive immunity, crucial for the maintenance of regulatory T-cell function and B-cell maturation. The protein is Transcription regulator protein BACH2 (Bach2) of Mus musculus (Mouse).